An 87-amino-acid polypeptide reads, in one-letter code: Large ribosomal subunit protein eL33 (87 aa).

Belongs to the eukaryotic ribosomal protein eL33 family.

This chain is Large ribosomal subunit protein eL33, found in Pyrococcus horikoshii (strain ATCC 700860 / DSM 12428 / JCM 9974 / NBRC 100139 / OT-3).